Consider the following 350-residue polypeptide: Phosphoribosylformylglycinamidine cyclo-ligase (350 aa).

Belongs to the AIR synthase family.

The protein localises to the cytoplasm. The enzyme catalyses 2-formamido-N(1)-(5-O-phospho-beta-D-ribosyl)acetamidine + ATP = 5-amino-1-(5-phospho-beta-D-ribosyl)imidazole + ADP + phosphate + H(+). It functions in the pathway purine metabolism; IMP biosynthesis via de novo pathway; 5-amino-1-(5-phospho-D-ribosyl)imidazole from N(2)-formyl-N(1)-(5-phospho-D-ribosyl)glycinamide: step 2/2. The chain is Phosphoribosylformylglycinamidine cyclo-ligase from Cupriavidus taiwanensis (strain DSM 17343 / BCRC 17206 / CCUG 44338 / CIP 107171 / LMG 19424 / R1) (Ralstonia taiwanensis (strain LMG 19424)).